The primary structure comprises 352 residues: Rhodopsin, deep-sea form (352 aa).

Over 1–36 (MNGTEGPNFYIPMSNITGVVRSPFEYPQYYLAEPWA) the chain is Extracellular. N-linked (GlcNAc...) asparagine glycosylation is found at N2 and N15. Residues 37 to 61 (YTILAAYMFTLILLGFPVNFLTLYV) traverse the membrane as a helical segment. Over 62–73 (TIEHKKLRTPLN) the chain is Cytoplasmic. The chain crosses the membrane as a helical span at residues 74–98 (YILLNLAVANLFMVFGGFTTTVYTS). The Extracellular portion of the chain corresponds to 99 to 113 (MHGYFVFGETGCNLE). C110 and C187 form a disulfide bridge. The chain crosses the membrane as a helical span at residues 114-133 (GYFATLGGEISLWSLVVLAI). Over 134 to 152 (ERWVVVCKPMSNFRFGENH) the chain is Cytoplasmic. The chain crosses the membrane as a helical span at residues 153–176 (AIMGLAFTWIMANSCAMPPLFGWS). The Extracellular portion of the chain corresponds to 177-202 (RYIPEGMQCSCGVDYYTLKPEVNNES). N-linked (GlcNAc...) asparagine glycosylation is present at N200. Residues 203–230 (FVIYMFIVHFSVPLTIISFCYGRLVCTV) traverse the membrane as a helical segment. Topologically, residues 231 to 252 (KEAAAQQQESETTQRAEREVTR) are cytoplasmic. Residues 253–276 (MVVIMVIAFLVCWVPYASVAWYIF) traverse the membrane as a helical segment. Residues 277 to 284 (THQGSTFG) are Extracellular-facing. Residues 285 to 309 (PVFMTVPSFFAKSSAIYNPLIYICL) form a helical membrane-spanning segment. Position 296 is an N6-(retinylidene)lysine (K296). Topologically, residues 310–352 (NSQFRNCMITTLFCGKNPFQEEEGASTTASKTEASSVSSVSPA) are cytoplasmic. Residue C323 is the site of S-palmitoyl cysteine attachment. Residues 333-352 (GASTTASKTEASSVSSVSPA) form a disordered region. A compositionally biased stretch (low complexity) spans 334–352 (ASTTASKTEASSVSSVSPA).

Belongs to the G-protein coupled receptor 1 family. Opsin subfamily. In terms of processing, phosphorylated on some or all of the serine and threonine residues present in the C-terminal region. In terms of tissue distribution, rod shaped photoreceptor cells which mediates vision in dim light.

It localises to the membrane. Its function is as follows. Visual pigments such as rhodopsin and porphyropsin are light-absorbing molecules that mediate vision. Rhodopsin consists of an apoprotein, opsin, covalently linked to 11-cis-retinal. This receptor is coupled to the activation of phospholipase C. Porphyropsin consists of opsin covalently linked to 11-cis 3,4-didehydroretinal. The sequence is that of Rhodopsin, deep-sea form from Anguilla anguilla (European freshwater eel).